Here is a 130-residue protein sequence, read N- to C-terminus: Protein ApaG (130 aa).

The ApaG domain maps to 3 to 127 (RALTRDIEVV…FSLDSPGLLR (125 aa)). The segment at 63-83 (EVTGPGVVGEQPRLSPGDTYE) is disordered.

This Rhizobium etli (strain ATCC 51251 / DSM 11541 / JCM 21823 / NBRC 15573 / CFN 42) protein is Protein ApaG.